Consider the following 110-residue polypeptide: Proline-rich protein 15-like protein A (110 aa).

2 disordered regions span residues 29 to 51 (IAGDHSSNGGEAPGTTDAATDSQ) and 65 to 110 (TKGR…KSGK). Residues 65 to 85 (TKGRHVKVSHSGRFKEKKRIR) show a composition bias toward basic residues. Positions 100-110 (TTANENNKSGK) are enriched in polar residues.

Belongs to the PRR15 family.

This is Proline-rich protein 15-like protein A (prr15la) from Danio rerio (Zebrafish).